The sequence spans 184 residues: UPF0398 protein OB1025 (184 aa).

This sequence belongs to the UPF0398 family.

The protein is UPF0398 protein OB1025 of Oceanobacillus iheyensis (strain DSM 14371 / CIP 107618 / JCM 11309 / KCTC 3954 / HTE831).